Consider the following 878-residue polypeptide: Alanine--tRNA ligase (878 aa).

Residues histidine 567, histidine 571, cysteine 669, and histidine 673 each coordinate Zn(2+).

The protein belongs to the class-II aminoacyl-tRNA synthetase family. Zn(2+) serves as cofactor.

It is found in the cytoplasm. The enzyme catalyses tRNA(Ala) + L-alanine + ATP = L-alanyl-tRNA(Ala) + AMP + diphosphate. Its function is as follows. Catalyzes the attachment of alanine to tRNA(Ala) in a two-step reaction: alanine is first activated by ATP to form Ala-AMP and then transferred to the acceptor end of tRNA(Ala). Also edits incorrectly charged Ser-tRNA(Ala) and Gly-tRNA(Ala) via its editing domain. The protein is Alanine--tRNA ligase of Rickettsia conorii (strain ATCC VR-613 / Malish 7).